The sequence spans 137 residues: Large ribosomal subunit protein uL16 (137 aa).

Belongs to the universal ribosomal protein uL16 family. In terms of assembly, part of the 50S ribosomal subunit.

In terms of biological role, binds 23S rRNA and is also seen to make contacts with the A and possibly P site tRNAs. The protein is Large ribosomal subunit protein uL16 of Xanthomonas axonopodis pv. citri (strain 306).